The chain runs to 147 residues: VDWTDAERAAIKALWGKIDVGEIGPQALSRLLIVYPWTQRHFKGFGNISTNAAILGNAKVAEHGKTVMGGLDRAVQNMDNIKNVYKQLSIKHSEKIHVDPDNFRLLGEIITMCVGAKFGPSAFTPEIHEAWQKFLAVVVSALGRQYH.

The region spanning 2 to 147 (DWTDAERAAI…VVSALGRQYH (146 aa)) is the Globin domain. Heme b-binding residues include H63 and H92.

The protein belongs to the globin family. Heterotetramer of two alpha chains and two beta chains. Red blood cells.

Its function is as follows. Involved in oxygen transport from gills to the various peripheral tissues. This is Hemoglobin subunit beta (hbb) from Leiostomus xanthurus (Spot).